The chain runs to 318 residues: MSNEYFDPKLKIFSLNSNRELAEEIAKEVGIELGKSSVTHFSDGEIQINIEESIRGCHVYVIQSTSNPVNQNLMELLIMIDALKRASAATINIVMPYYGYARQDRKARSREPITAKLVANLIETAGATRMITLDMHAPQIQGFFDIPIDHLNAVRLLSDYFSERHLGDDLVVVSPDHGGVTRARKMADRLKAPIAIIDKRRPRPNVAEVMNIVGNVEGKVCIIIDDIIDTAGTITLAAKALREAGATKVYACCSHPVLSGPAMKRIEESPIEKLVVTNSIALPEEKWIDKMEQLSVAALLGEAIVRVHENASVSSLFE.

Residues 43–45 and 102–103 contribute to the ATP site; these read DGE and RQ. Residues H136 and D176 each coordinate Mg(2+). K199 is an active-site residue. Residues R201, D225, and 229-233 each bind D-ribose 5-phosphate; that span reads DTAGT.

It belongs to the ribose-phosphate pyrophosphokinase family. Class I subfamily. Homohexamer. Mg(2+) is required as a cofactor.

It is found in the cytoplasm. The catalysed reaction is D-ribose 5-phosphate + ATP = 5-phospho-alpha-D-ribose 1-diphosphate + AMP + H(+). The protein operates within metabolic intermediate biosynthesis; 5-phospho-alpha-D-ribose 1-diphosphate biosynthesis; 5-phospho-alpha-D-ribose 1-diphosphate from D-ribose 5-phosphate (route I): step 1/1. In terms of biological role, involved in the biosynthesis of the central metabolite phospho-alpha-D-ribosyl-1-pyrophosphate (PRPP) via the transfer of pyrophosphoryl group from ATP to 1-hydroxyl of ribose-5-phosphate (Rib-5-P). The protein is Ribose-phosphate pyrophosphokinase 1 of Listeria monocytogenes serotype 4b (strain F2365).